The primary structure comprises 823 residues: Sphingomyelin phosphodiesterase 4 (823 aa).

Phosphoserine is present on residues serine 130 and serine 245. Threonine 665 carries the phosphothreonine modification. Phosphoserine is present on serine 749. The chain crosses the membrane as a helical span at residues 776 to 796 (LLLLLMAFFVASLFCIGPLSC).

The cofactor is Mg(2+). As to expression, expressed in skeletal muscle (at protein level). In terms of tissue distribution, expressed in skeletal muscle but a lower levels than isoform 1 (at protein level).

Its subcellular location is the endoplasmic reticulum membrane. The protein resides in the golgi apparatus membrane. The protein localises to the nucleus envelope. It localises to the cell membrane. It is found in the sarcolemma. It carries out the reaction a sphingomyelin + H2O = phosphocholine + an N-acylsphing-4-enine + H(+). Its activity is regulated as follows. Activated by phosphatidylserine and tumor necrosis factor (TNF). Inhibited by scyphostatin. In terms of biological role, catalyzes the hydrolysis of membrane sphingomyelin to form phosphorylcholine and ceramide. It has a relevant role in the homeostasis of membrane sphingolipids, thereby influencing membrane integrity, and endoplasmic reticulum organization and function. May sensitize cells to DNA damage-induced apoptosis. In skeletal muscle, mediates TNF-stimulated oxidant production. The chain is Sphingomyelin phosphodiesterase 4 (Smpd4) from Mus musculus (Mouse).